Reading from the N-terminus, the 102-residue chain is Ribosomal silencing factor RsfS (102 aa).

Belongs to the Iojap/RsfS family. As to quaternary structure, interacts with ribosomal protein uL14 (rplN).

The protein resides in the cytoplasm. Its function is as follows. Functions as a ribosomal silencing factor. Interacts with ribosomal protein uL14 (rplN), blocking formation of intersubunit bridge B8. Prevents association of the 30S and 50S ribosomal subunits and the formation of functional ribosomes, thus repressing translation. This Haemophilus influenzae (strain ATCC 51907 / DSM 11121 / KW20 / Rd) protein is Ribosomal silencing factor RsfS.